A 1482-amino-acid polypeptide reads, in one-letter code: MVLELLKNNYERNDEHYYNEKVENNTSKHKKKKKKKKKHILVEESEKYDRNIDSENNEEAYNAYELIKTKPNNIYEEKYDFSFQNLDKKCLREKNNMRESYRNSKDIIQYGTNENDIFTEDMLENDNFDDDSFVEDDTMDYKTYNSYTKPEFNLFSKYSTESKKKNIMNNKKHSKIEDFYKKYKNNSEYSKQANEHDASIIQFLNNNKKSVDCGKMKDINFKKNDSQNYSESNKYKNEFFKNYNYDNKYTNNYAHDNNQDSNSYYYADENEPKDNHEEDNDTGDTYADNEEDEDNRDDNDDYSQYNQCEVESDTNQIRPNEKRYNESIKHINDSNLKINKELLLKRETYTKRDNIFYIKKDIIPYKKEHNNNRFSLYDSSKNNNEHNNNYEIKFMNYKKDSEKEGEQWLKNIKKEKDEEFLKKYMYENALKKTHSSKDLQFNRLDDEKNILHHDINVDNKMVRLDKYERSNIRDMRNKTNKCNMLRHDTAEFNKIRRKDEINNYSEYANKCLAGNIYEEDDSYILKRNELGHKELKVIDNPILNINPDDKKKPNIKSFLDKIKYRKNNELFLKNEHEKYVGIQETNKKDKIKMKFADILHTKNFSNFFHRGKNSIAKSLSPNNDKKNTSFNNEVFNLNILGKNDKNSDYKQYNINCSPYDHENTSFHPSVREETKYYENKESRKRLDYNCDEDNYIENSIQRYHENNIDYNSINIERTINLREDIKYNEFLNKPDKINSENFSNNFNDNKQKSLKNDDSNKIRDTNKLYYHDHLENTMRSNYIQKEYTEKISDILESNSNNMRKFINKMDYYTKKYEQNLYKNDEDIYTKENKFPDSRKEFYNKSDSPMKVTDGIKDSQYENYNRIKYKLKMKQEKQDKEDETDINIDKKLSRKMIENNKLKEENESNDELIVTPFYIKSKIDKVLKNSEIFERSARATFKQFDVKNKNFLHFSEIESLIQKLCYNLELPPVDKKILSIVYKDYDSSKNNCMNYMDFRQMYWDLLKQIKKKYYPTKNFKIKRNCIISRKKLQGYDYSSIYNYLSFKKILGCGAFGEVHLVEDNICKLYKVVKILKKKKMKNIKVNEEINVLIYLDHPNIIKIFDVYESVNCTYIVMELCEGGELMNKIKKPQIFSETYIKNIMFQILCAIAYMHSNNIAHKDLKPENILFKTDGYDTLKIIDFGLAELINKSEGISKTAAGTVLYMAPEVFKKKFTIKCDIWSAGVIMYFLFTKSLPFTGNTYEEVKQNIFNSEPDYQFLKLKMSKPALHLLKLMLEKDYSRRPMAAVLLHHPWFQGYFDPIDILPSTLNNIKSYMKHSNIRNVIVNIMAHELCVINNHVKYINDIFLKIDSNHNGSLSHREIYNVLSNAGVKKWDINRIIQALDVNDKGCITYTEFIAGCYRWKNIDSTFLKAAFNKIDKDEDGYISKSDLATLVHDNGVNNKDIENFFISVHSIKKNITKDKKINKISFEDFKDYMLSTF.

Disordered regions lie at residues 250-320 (TNNY…IRPN) and 739-760 (SENF…DDSN). Residues 254–264 (AHDNNQDSNSY) show a composition bias toward polar residues. The segment covering 277–301 (EEDNDTGDTYADNEEDEDNRDDNDD) has biased composition (acidic residues). Over residues 302 to 318 (YSQYNQCEVESDTNQIR) the composition is skewed to polar residues. Over residues 739–748 (SENFSNNFND) the composition is skewed to low complexity. Positions 749–760 (NKQKSLKNDDSN) are enriched in basic and acidic residues. 2 EF-hand domains span residues 931-966 (IFER…LCYN) and 972-1007 (VDKK…LLKQ). Ca(2+) is bound by residues Asp-985, Ser-987, Asn-989, Cys-991, and Asp-996. One can recognise a Protein kinase domain in the interval 1043–1295 (LSFKKILGCG…AAVLLHHPWF (253 aa)). Residues 1049 to 1057 (LGCGAFGEV) and Lys-1072 contribute to the ATP site. The Proton acceptor role is filled by Asp-1162. 4 EF-hand domains span residues 1338–1373 (NHVK…AGVK), 1376–1406 (DINR…RWKN), 1407–1442 (IDST…NGVN), and 1468–1482 (KISF…LSTF). Ca(2+) contacts are provided by Asp-1351, Asn-1353, Asn-1355, Ser-1357, and Glu-1362. Asp-1420, Asp-1422, Asp-1424, Tyr-1426, and Asp-1431 together coordinate Ca(2+).

This sequence belongs to the protein kinase superfamily. Ser/Thr protein kinase family. CDPK subfamily. It depends on Mg(2+) as a cofactor.

The catalysed reaction is L-seryl-[protein] + ATP = O-phospho-L-seryl-[protein] + ADP + H(+). It carries out the reaction L-threonyl-[protein] + ATP = O-phospho-L-threonyl-[protein] + ADP + H(+). Its activity is regulated as follows. Activated by calcium. Functionally, calcium-dependent protein kinase which acts as a sensor and effector of intracellular Ca(2+) levels. In sporozoites, probably involved in the secretion of the cysteine protease that cleaves circumsporozoite protein CSP, thereby exposing CSP TSR domain, which binds with high affinity to highly sulfated heparan sulfate proteoglycans (HSPGs), resulting in productive invasion of the host hepatocytes. This chain is Calcium-dependent protein kinase 6, found in Plasmodium berghei (strain Anka).